We begin with the raw amino-acid sequence, 159 residues long: Ribonuclease H (159 aa).

Positions 4–145 (THKQVNIYTD…CDKLARDAAE (142 aa)) constitute an RNase H type-1 domain. Residues Asp-13, Glu-51, Asp-73, and Asp-137 each coordinate Mg(2+).

Belongs to the RNase H family. As to quaternary structure, monomer. Requires Mg(2+) as cofactor.

The protein resides in the cytoplasm. It carries out the reaction Endonucleolytic cleavage to 5'-phosphomonoester.. Endonuclease that specifically degrades the RNA of RNA-DNA hybrids. The polypeptide is Ribonuclease H (Shewanella denitrificans (strain OS217 / ATCC BAA-1090 / DSM 15013)).